The chain runs to 290 residues: 7-methylguanosine phosphate-specific 5'-nucleotidase A (290 aa).

Asp39 functions as the Nucleophile in the catalytic mechanism. Mg(2+) is bound by residues Asp39 and Asp41. Residue Asp41 is the Proton donor of the active site. Residue Glu86 participates in CMP binding. Residue Glu86 coordinates N(7)-methyl-GMP. Substrate-binding positions include 154 to 155 (SA) and Lys203. Asp228 contributes to the Mg(2+) binding site.

This sequence belongs to the pyrimidine 5'-nucleotidase family. As to quaternary structure, monomer.

The protein localises to the cytoplasm. The catalysed reaction is N(7)-methyl-GMP + H2O = N(7)-methylguanosine + phosphate. The enzyme catalyses CMP + H2O = cytidine + phosphate. It carries out the reaction a ribonucleoside 5'-phosphate + H2O = a ribonucleoside + phosphate. Specifically hydrolyzes 7-methylguanosine monophosphate (m(7)GMP) to 7-methylguanosine and inorganic phosphate. The specific activity for m(7)GMP may protect cells against undesired salvage of m(7)GMP and its incorporation into nucleic acids. Also has weak activity for CMP. UMP and purine nucleotides are poor substrates. The sequence is that of 7-methylguanosine phosphate-specific 5'-nucleotidase A (Nt5c3b-a) from Xenopus laevis (African clawed frog).